The chain runs to 172 residues: MSVPEPPPPDGVLTGPSDSLEAGEPTPGLSDTSPDEGLIEDFPVDDRAVEHLVGGLLSHYLPDLQRSKRALQELTQNQVVLLDTLEQEISKFKECHSMLDINALFTEAKHYHAKLVTIRKEMLLLHEKTSKLKKRALKLQQKRQREELEREQQREKEFEREKQLTAKPAKRT.

Residues 1–10 show a composition bias toward pro residues; the sequence is MSVPEPPPPD. Disordered regions lie at residues 1-37 and 141-172; these read MSVPEPPPPDGVLTGPSDSLEAGEPTPGLSDTSPDEG and QKRQREELEREQQREKEFEREKQLTAKPAKRT. Positions 63–167 form a coiled coil; it reads DLQRSKRALQ…FEREKQLTAK (105 aa). The segment covering 143–164 has biased composition (basic and acidic residues); that stretch reads RQREELEREQQREKEFEREKQL.

It belongs to the BLOC1S6 family. Octamer composed of one copy each BLOC1S1, BLOC1S2, BLOC1S3, BLOC1S4, BLOC1S5, BLOC1S6, DTNBP1/BLOC1S7 and SNAPIN/BLOC1S8. Interacts with SNAP47. Homodimer. Component of the biogenesis of lysosome-related organelles complex 1 (BLOC-1) composed of BLOC1S1, BLOC1S2, BLOC1S3, BLOC1S4, BLOC1S5, BLOC1S6, DTNBP1/BLOC1S7 and SNAPIN/BLOC1S8. Interacts with BLOC1S4, BLOC1S5, DTNBP1/BLOC1S7, F-actin, SNAP25 isoform 1 and STX12. In terms of processing, phosphorylated. Expressed in liver, kidney and spleen (at protein level). Ubiquitously expressed, with the highest expression levels observed in brain, heart, liver and kidney.

The protein localises to the cytoplasm. It is found in the membrane. Component of the BLOC-1 complex, a complex that is required for normal biogenesis of lysosome-related organelles (LRO), such as platelet dense granules and melanosomes. In concert with the AP-3 complex, the BLOC-1 complex is required to target membrane protein cargos into vesicles assembled at cell bodies for delivery into neurites and nerve terminals. The BLOC-1 complex, in association with SNARE proteins, is also proposed to be involved in neurite extension. May play a role in intracellular vesicle trafficking, particularly in the vesicle-docking and fusion process. The polypeptide is Biogenesis of lysosome-related organelles complex 1 subunit 6 (Bloc1s6) (Mus musculus (Mouse)).